The sequence spans 24 residues: Transaldolase (24 aa).

Belongs to the transaldolase family.

The protein resides in the cytoplasm. The enzyme catalyses D-sedoheptulose 7-phosphate + D-glyceraldehyde 3-phosphate = D-erythrose 4-phosphate + beta-D-fructose 6-phosphate. It functions in the pathway carbohydrate degradation; pentose phosphate pathway; D-glyceraldehyde 3-phosphate and beta-D-fructose 6-phosphate from D-ribose 5-phosphate and D-xylulose 5-phosphate (non-oxidative stage): step 2/3. Functionally, transaldolase is important for the balance of metabolites in the pentose-phosphate pathway. This is Transaldolase from Capsicum annuum var. annuum (Red pepper).